The primary structure comprises 342 residues: UDP-N-acetylglucosamine transporter YEA4 (342 aa).

The Cytoplasmic segment spans residues Met-1–Lys-6. A helical membrane pass occupies residues Ala-7–Ser-27. Residues Asn-28–Asn-35 lie on the Lumenal side of the membrane. The chain crosses the membrane as a helical span at residues Leu-36–Val-56. Residues His-57–Pro-61 are Cytoplasmic-facing. A helical transmembrane segment spans residues Tyr-62 to Ile-82. The Lumenal portion of the chain corresponds to Ser-83–Ser-96. The chain crosses the membrane as a helical span at residues Ile-97–Leu-117. The Cytoplasmic segment spans residues Leu-118–Tyr-123. A helical membrane pass occupies residues Thr-124–Phe-144. Residues Lys-145–Asp-168 lie on the Lumenal side of the membrane. A helical membrane pass occupies residues Leu-169–Ser-189. Residues Ala-190–Glu-253 are Cytoplasmic-facing. A helical membrane pass occupies residues Thr-254 to Ala-274. The Lumenal portion of the chain corresponds to Ser-275–Tyr-307. The helical transmembrane segment at Thr-308 to Ile-328 threads the bilayer. The Cytoplasmic segment spans residues His-329–Lys-342.

The protein belongs to the nucleotide-sugar transporter family. SLC35B subfamily.

It localises to the endoplasmic reticulum. Its subcellular location is the endoplasmic reticulum membrane. Functionally, sugar transporter that specifically mediates the transport of UDP-N-acetylglucosamine (UDP-GlcNAc) and is required for cell wall chitin synthesis. The polypeptide is UDP-N-acetylglucosamine transporter YEA4 (YEA4) (Saccharomyces cerevisiae (strain ATCC 204508 / S288c) (Baker's yeast)).